The sequence spans 261 residues: Acetylglutamate kinase (261 aa).

Substrate is bound by residues 41–42, arginine 63, and asparagine 157; that span reads GG.

Belongs to the acetylglutamate kinase family. ArgB subfamily.

The protein resides in the cytoplasm. The enzyme catalyses N-acetyl-L-glutamate + ATP = N-acetyl-L-glutamyl 5-phosphate + ADP. It participates in amino-acid biosynthesis; L-arginine biosynthesis; N(2)-acetyl-L-ornithine from L-glutamate: step 2/4. Its function is as follows. Catalyzes the ATP-dependent phosphorylation of N-acetyl-L-glutamate. This chain is Acetylglutamate kinase, found in Koribacter versatilis (strain Ellin345).